A 365-amino-acid chain; its full sequence is G-protein coupled receptor 4 (365 aa).

At 1–10 the chain is on the extracellular side; that stretch reads MDNSTGTWEG. An N-linked (GlcNAc...) asparagine glycan is attached at Asn3. A helical membrane pass occupies residues 11-47; sequence CHVDSRVDHLFPPSLYIFVIGVGLPTNCLALWAAYRQ. 2 cysteine pairs are disulfide-bonded: Cys11–Cys260 and Cys92–Cys170. At 48 to 51 the chain is on the cytoplasmic side; sequence VRQR. Residues 52 to 82 form a helical membrane-spanning segment; it reads NELGVYLMNLSIADLLYICTLPLWVDYFLHH. Residues 83 to 87 lie on the Extracellular side of the membrane; that stretch reads DNWIH. A helical membrane pass occupies residues 88-123; the sequence is GPGSCKLFGFIFYSNIYISIAFLCCISVDRYLAVAH. Over 124–131 the chain is Cytoplasmic; the sequence is PLRFARLR. Residues 132 to 158 traverse the membrane as a helical segment; sequence RVKTAVAVSSVVWATELGANSAPLFHD. The Extracellular segment spans residues 159–174; it reads ELFRDRYNHTFCFEKF. Residues 159 to 174 form an extracellular loop 2 (ECL2) region; it reads ELFRDRYNHTFCFEKF. Asn166 carries N-linked (GlcNAc...) asparagine glycosylation. Residues 175–212 traverse the membrane as a helical segment; sequence PMERWVAWMNLYRVFVGFLFPWALMLLCYRGILRAVQS. The Cytoplasmic segment spans residues 213–216; that stretch reads SVST. Residues 217-252 form a helical membrane-spanning segment; it reads ERQEKVKIKRLALSLIAIVLVCFAPYHALLLSRSAV. The Extracellular portion of the chain corresponds to 253 to 262; the sequence is YLGRPWDCGF. The helical transmembrane segment at 263–291 threads the bilayer; that stretch reads EERVFSAYHSSLAFTSLNCVADPILYCLV. The Cytoplasmic portion of the chain corresponds to 292–365; it reads NEGARSDVAK…PLKVLLPPAQ (74 aa).

It belongs to the G-protein coupled receptor 1 family.

The protein localises to the cell membrane. Its activity is regulated as follows. Activated by a network of residues that connects an extracellular-facing cavity to Glu-147, a conserved charged residue buried in the transmembrane core of the receptor. Protonation likely drives conformational changes in extracellular loop 2 (ECL2), which stabilizes movement of transmembrane 3 (TM3) and a series of rearrangements that connect the extracellular-facing cavity to Glu-147, a residue only conserved in proton-sensing G-protein coupled receptors. Its function is as follows. Proton-sensing G-protein coupled receptor activated by extracellular pH, which is required to monitor pH changes and generate adaptive reactions. Activated by an optimal pH of 6.8-7.2. Ligand binding causes a conformation change that triggers signaling via guanine nucleotide-binding proteins (G proteins) and modulates the activity of downstream effectors, such as adenylate cyclase. GPR4 is mainly coupled to G(s) G proteins and mediates activation of adenylate cyclase activity. May also couple with G(q) and G(12)/G(13) G proteins. Acts as a key regulator of respiratory sensitivity to CO2/H(+) in brain retrotrapezoid nucleus neurons: acts by mediating detection of protons generated by the formation of carbonic acid in the blood, an important mechanism to impulse to breathe. Also acts as a regulator of acid secretion in the kidney collecting duct by maintaining acid-base homeostasis in the kidney. Acidosis-induced GPR4 activation increases paracellular gap formation and permeability of vascular endothelial cells, possibly through the G(12)/G(13)/Rho GTPase signaling pathway. This is G-protein coupled receptor 4 from Rattus norvegicus (Rat).